A 137-amino-acid polypeptide reads, in one-letter code: Interferon-induced transmembrane protein 3 (137 aa).

Topologically, residues 1–57 (MNHTSQAFVNAATGGQPPNYERIKEEYEVSELGAPHGSASVRTTVINMPREVSVPDH) are cytoplasmic. The residue at position 20 (Tyr-20) is a Phosphotyrosine. A Glycyl lysine isopeptide (Lys-Gly) (interchain with G-Cter in ubiquitin) cross-link involves residue Lys-24. At Tyr-27 the chain carries Phosphotyrosine. The segment at residues 58–78 (VVWSLFNTLFMNFCCLGFIAY) is an intramembrane region (helical). The segment at 60 to 93 (WSLFNTLFMNFCCLGFIAYAYSVKSRDRKMVGDM) is interaction with SPP1. 2 S-palmitoyl cysteine lipidation sites follow: Cys-71 and Cys-72. The Cytoplasmic portion of the chain corresponds to 79-109 (AYSVKSRDRKMVGDMTGAQAYASTAKCLNIS). Residues Lys-83, Lys-88, and Lys-104 each participate in a glycyl lysine isopeptide (Lys-Gly) (interchain with G-Cter in ubiquitin) cross-link. A lipid anchor (S-palmitoyl cysteine) is attached at Cys-105. The segment at 108-133 (ISSLVLSILMVIITIVTVVIIALNAP) is interaction with VAPA. Residues 110 to 130 (SLVLSILMVIITIVTVVIIAL) form a helical membrane-spanning segment. The Extracellular portion of the chain corresponds to 131-137 (NAPRLQT).

It belongs to the CD225/Dispanin family. Interacts with ATP6V0B. Interacts with CD81. Interacts with SPP1; the interaction reduces OPN expression. Interacts with BRI3. Post-translationally, polyubiquitinated with both 'Lys-48' and 'Lys-63' linkages. Ubiquitination negatively regulates antiviral activity. Lys-24 is the most prevalent ubiquitination site. Phosphorylation at Tyr-20 is required for endosomal and lysosomal location.

Its subcellular location is the cell membrane. The protein resides in the late endosome membrane. The protein localises to the early endosome membrane. It localises to the lysosome membrane. It is found in the cytoplasm. Its subcellular location is the perinuclear region. Functionally, IFN-induced antiviral protein which disrupts intracellular cholesterol homeostasis. Inhibits the entry of viruses to the host cell cytoplasm by preventing viral fusion with cholesterol depleted endosomes. May inactivate new enveloped viruses which buds out of the infected cell, by letting them go out with a cholesterol depleted membrane. Active against multiple viruses. Plays a critical role in the structural stability and function of vacuolar ATPase (v-ATPase). Establishes physical contact with the v-ATPase of endosomes which is critical for proper clathrin localization and is also required for the function of the v-ATPase to lower the pH in phagocytic endosomes thus establishing an antiviral state. This chain is Interferon-induced transmembrane protein 3, found in Rattus norvegicus (Rat).